A 148-amino-acid polypeptide reads, in one-letter code: Lysozyme C (148 aa).

The N-terminal stretch at 1–18 (MKVLVILGLVLLSVMVQG) is a signal peptide. Positions 19-148 (KVFERCELAR…VSQYVQGCGV (130 aa)) constitute a C-type lysozyme domain. 4 disulfide bridges follow: cysteine 24-cysteine 146, cysteine 48-cysteine 134, cysteine 83-cysteine 99, and cysteine 95-cysteine 113. Active-site residues include glutamate 53 and aspartate 71.

This sequence belongs to the glycosyl hydrolase 22 family. Monomer.

The protein resides in the secreted. The enzyme catalyses Hydrolysis of (1-&gt;4)-beta-linkages between N-acetylmuramic acid and N-acetyl-D-glucosamine residues in a peptidoglycan and between N-acetyl-D-glucosamine residues in chitodextrins.. In terms of biological role, lysozymes have primarily a bacteriolytic function; those in tissues and body fluids are associated with the monocyte-macrophage system and enhance the activity of immunoagents. The chain is Lysozyme C (LYZ) from Saimiri sciureus (Common squirrel monkey).